Here is a 698-residue protein sequence, read N- to C-terminus: Methionine synthase reductase (698 aa).

The Flavodoxin-like domain maps to 5–147; that stretch reads LLLYATQQGQ…VVEPWIAGLW (143 aa). 93 to 124 contacts FMN; that stretch reads LLGLGDSEYTYFCNGGKIIDKRLQELGARHFY. Residues 166–247 form a hinge region; the sequence is ALPVASPASS…ASLNIPGLPP (82 aa). Phosphoserine occurs at positions 171 and 189. In terms of domain architecture, FAD-binding FR-type spans 271–533; sequence DPVFQVPISK…PRTTNSFHLP (263 aa). An NADP(+)-binding site is contributed by K291. Residues 451–454 and 487–490 each bind FAD; these read RPYS and GVCT. Residues 610 to 611, 624 to 626, and D659 contribute to the NADP(+) site; these read SR and YVQ. W697 contacts FAD.

In terms of assembly, forms a multiprotein complex with MMACHC, MMADHC and MTR. Requires FAD as cofactor. The cofactor is FMN. In terms of tissue distribution, found in all tissues tested, particularly abundant in skeletal muscle.

Its subcellular location is the cytoplasm. It carries out the reaction 2 methylcob(III)alamin-[methionine synthase] + 2 S-adenosyl-L-homocysteine + NADP(+) + H(+) = 2 cob(II)alamin-[methionine synthase] + 2 S-adenosyl-L-methionine + NADPH. The catalysed reaction is 2 cob(II)alamin + A + 2 H2O + 2 H(+) = 2 aquacob(III)alamin + AH2. In terms of biological role, key enzyme in methionine and folate homeostasis responsible for the reactivation of methionine synthase (MTR/MS) activity by catalyzing the reductive methylation of MTR-bound cob(II)alamin. Cobalamin (vitamin B12) forms a complex with MTR to serve as an intermediary in methyl transfer reactions that cycles between MTR-bound methylcob(III)alamin and MTR bound-cob(I)alamin forms, and occasional oxidative escape of the cob(I)alamin intermediate during the catalytic cycle leads to the inactive cob(II)alamin species. The processing of cobalamin in the cytosol occurs in a multiprotein complex composed of at least MMACHC, MMADHC, MTRR and MTR which may contribute to shuttle safely and efficiently cobalamin towards MTR in order to produce methionine. Also necessary for the utilization of methyl groups from the folate cycle, thereby affecting transgenerational epigenetic inheritance. Also acts as a molecular chaperone for methionine synthase by stabilizing apoMTR and incorporating methylcob(III)alamin into apoMTR to form the holoenzyme. Also serves as an aquacob(III)alamin reductase by reducing aquacob(III)alamin to cob(II)alamin; this reduction leads to stimulation of the conversion of apoMTR and aquacob(III)alamin to MTR holoenzyme. This is Methionine synthase reductase from Homo sapiens (Human).